We begin with the raw amino-acid sequence, 104 residues long: Phosphoribosyl-ATP pyrophosphatase (104 aa).

It belongs to the PRA-PH family.

It is found in the cytoplasm. The catalysed reaction is 1-(5-phospho-beta-D-ribosyl)-ATP + H2O = 1-(5-phospho-beta-D-ribosyl)-5'-AMP + diphosphate + H(+). Its pathway is amino-acid biosynthesis; L-histidine biosynthesis; L-histidine from 5-phospho-alpha-D-ribose 1-diphosphate: step 2/9. The chain is Phosphoribosyl-ATP pyrophosphatase from Streptococcus thermophilus (strain ATCC BAA-491 / LMD-9).